Consider the following 412-residue polypeptide: Argininosuccinate synthase (412 aa).

ATP is bound by residues 20–28 and Ala48; that span reads AYSGGLDTS. L-citrulline is bound by residues Tyr100 and Ser105. Gly130 contacts ATP. L-aspartate is bound by residues Thr132, Asn136, and Asp137. Asn136 is an L-citrulline binding site. Residues Arg140, Ser189, Ser198, Glu274, and Tyr286 each coordinate L-citrulline.

The protein belongs to the argininosuccinate synthase family. Type 1 subfamily. Homotetramer.

Its subcellular location is the cytoplasm. The catalysed reaction is L-citrulline + L-aspartate + ATP = 2-(N(omega)-L-arginino)succinate + AMP + diphosphate + H(+). It participates in amino-acid biosynthesis; L-arginine biosynthesis; L-arginine from L-ornithine and carbamoyl phosphate: step 2/3. The polypeptide is Argininosuccinate synthase (Shewanella halifaxensis (strain HAW-EB4)).